The primary structure comprises 235 residues: Leucyl/phenylalanyl-tRNA--protein transferase (235 aa).

Belongs to the L/F-transferase family.

It localises to the cytoplasm. The enzyme catalyses N-terminal L-lysyl-[protein] + L-leucyl-tRNA(Leu) = N-terminal L-leucyl-L-lysyl-[protein] + tRNA(Leu) + H(+). It catalyses the reaction N-terminal L-arginyl-[protein] + L-leucyl-tRNA(Leu) = N-terminal L-leucyl-L-arginyl-[protein] + tRNA(Leu) + H(+). The catalysed reaction is L-phenylalanyl-tRNA(Phe) + an N-terminal L-alpha-aminoacyl-[protein] = an N-terminal L-phenylalanyl-L-alpha-aminoacyl-[protein] + tRNA(Phe). Functions in the N-end rule pathway of protein degradation where it conjugates Leu, Phe and, less efficiently, Met from aminoacyl-tRNAs to the N-termini of proteins containing an N-terminal arginine or lysine. This chain is Leucyl/phenylalanyl-tRNA--protein transferase, found in Shewanella frigidimarina (strain NCIMB 400).